A 108-amino-acid polypeptide reads, in one-letter code: Tetrahydromethanopterin S-methyltransferase subunit B (108 aa).

Residues 77 to 99 (FQGMFFGFWVTMAVLVLVTILAV) traverse the membrane as a helical segment.

The protein belongs to the MtrB family. In terms of assembly, the complex is composed of 8 subunits; MtrA, MtrB, MtrC, MtrD, MtrE, MtrF, MtrG and MtrH.

The protein resides in the cell membrane. It catalyses the reaction 5-methyl-5,6,7,8-tetrahydromethanopterin + coenzyme M + 2 Na(+)(in) = 5,6,7,8-tetrahydromethanopterin + methyl-coenzyme M + 2 Na(+)(out). Its pathway is one-carbon metabolism; methanogenesis from CO(2); methyl-coenzyme M from 5,10-methylene-5,6,7,8-tetrahydromethanopterin: step 2/2. Functionally, part of a complex that catalyzes the formation of methyl-coenzyme M and tetrahydromethanopterin from coenzyme M and methyl-tetrahydromethanopterin. This is an energy-conserving, sodium-ion translocating step. The sequence is that of Tetrahydromethanopterin S-methyltransferase subunit B from Methanococcus maripaludis (strain DSM 14266 / JCM 13030 / NBRC 101832 / S2 / LL).